The following is a 77-amino-acid chain: Large ribosomal subunit protein bL28 (77 aa).

This sequence belongs to the bacterial ribosomal protein bL28 family.

This Karelsulcia muelleri (strain GWSS) (Sulcia muelleri) protein is Large ribosomal subunit protein bL28.